Reading from the N-terminus, the 228-residue chain is Non-fluorescent flavoprotein (228 aa).

Belongs to the bacterial luciferase oxidoreductase family. In terms of assembly, homodimer. Requires FMN as cofactor.

The sequence is that of Non-fluorescent flavoprotein (luxF) from Photobacterium leiognathi.